The chain runs to 219 residues: 2-C-methyl-D-erythritol 4-phosphate cytidylyltransferase (219 aa).

This sequence belongs to the IspD/TarI cytidylyltransferase family. IspD subfamily.

It carries out the reaction 2-C-methyl-D-erythritol 4-phosphate + CTP + H(+) = 4-CDP-2-C-methyl-D-erythritol + diphosphate. The protein operates within isoprenoid biosynthesis; isopentenyl diphosphate biosynthesis via DXP pathway; isopentenyl diphosphate from 1-deoxy-D-xylulose 5-phosphate: step 2/6. Its function is as follows. Catalyzes the formation of 4-diphosphocytidyl-2-C-methyl-D-erythritol from CTP and 2-C-methyl-D-erythritol 4-phosphate (MEP). The chain is 2-C-methyl-D-erythritol 4-phosphate cytidylyltransferase from Chlamydia trachomatis serovar L2 (strain ATCC VR-902B / DSM 19102 / 434/Bu).